The primary structure comprises 442 residues: Serine--tRNA ligase (442 aa).

244 to 246 (TAE) contacts L-serine. 275–277 (RAE) contacts ATP. Glu298 serves as a coordination point for L-serine. 365–368 (EISS) contacts ATP. Ser400 provides a ligand contact to L-serine.

It belongs to the class-II aminoacyl-tRNA synthetase family. Type-1 seryl-tRNA synthetase subfamily. As to quaternary structure, homodimer. The tRNA molecule binds across the dimer.

It is found in the cytoplasm. The catalysed reaction is tRNA(Ser) + L-serine + ATP = L-seryl-tRNA(Ser) + AMP + diphosphate + H(+). The enzyme catalyses tRNA(Sec) + L-serine + ATP = L-seryl-tRNA(Sec) + AMP + diphosphate + H(+). Its pathway is aminoacyl-tRNA biosynthesis; selenocysteinyl-tRNA(Sec) biosynthesis; L-seryl-tRNA(Sec) from L-serine and tRNA(Sec): step 1/1. Functionally, catalyzes the attachment of serine to tRNA(Ser). Is also able to aminoacylate tRNA(Sec) with serine, to form the misacylated tRNA L-seryl-tRNA(Sec), which will be further converted into selenocysteinyl-tRNA(Sec). This Bradyrhizobium sp. (strain BTAi1 / ATCC BAA-1182) protein is Serine--tRNA ligase.